Consider the following 401-residue polypeptide: G2/mitotic-specific cyclin-B1 (401 aa).

This sequence belongs to the cyclin family. Cyclin AB subfamily. Interacts with the CDK1 protein kinase to form a serine/threonine kinase holoenzyme complex also known as maturation promoting factor (MPF). The cyclin subunit imparts substrate specificity to the complex.

Essential for the control of the cell cycle at the G2/M (mitosis) transition. In Oryzias luzonensis (Luzon ricefish), this protein is G2/mitotic-specific cyclin-B1 (ccnb1).